A 616-amino-acid polypeptide reads, in one-letter code: Dihydroxy-acid dehydratase (616 aa).

A Mg(2+)-binding site is contributed by Asp-81. Cys-122 provides a ligand contact to [2Fe-2S] cluster. Mg(2+)-binding residues include Asp-123 and Lys-124. The residue at position 124 (Lys-124) is an N6-carboxylysine. [2Fe-2S] cluster is bound at residue Cys-195. Residue Glu-491 coordinates Mg(2+). The active-site Proton acceptor is Ser-517.

The protein belongs to the IlvD/Edd family. Homodimer. The cofactor is [2Fe-2S] cluster. It depends on Mg(2+) as a cofactor.

It catalyses the reaction (2R)-2,3-dihydroxy-3-methylbutanoate = 3-methyl-2-oxobutanoate + H2O. The enzyme catalyses (2R,3R)-2,3-dihydroxy-3-methylpentanoate = (S)-3-methyl-2-oxopentanoate + H2O. Its pathway is amino-acid biosynthesis; L-isoleucine biosynthesis; L-isoleucine from 2-oxobutanoate: step 3/4. It functions in the pathway amino-acid biosynthesis; L-valine biosynthesis; L-valine from pyruvate: step 3/4. In terms of biological role, functions in the biosynthesis of branched-chain amino acids. Catalyzes the dehydration of (2R,3R)-2,3-dihydroxy-3-methylpentanoate (2,3-dihydroxy-3-methylvalerate) into 2-oxo-3-methylpentanoate (2-oxo-3-methylvalerate) and of (2R)-2,3-dihydroxy-3-methylbutanoate (2,3-dihydroxyisovalerate) into 2-oxo-3-methylbutanoate (2-oxoisovalerate), the penultimate precursor to L-isoleucine and L-valine, respectively. This Shewanella loihica (strain ATCC BAA-1088 / PV-4) protein is Dihydroxy-acid dehydratase.